Reading from the N-terminus, the 421-residue chain is 4'-demethylrebeccamycin synthase (421 aa).

It belongs to the glycosyltransferase 28 family.

The enzyme catalyses 4'-demethylrebeccamycin + H2O = dichloroarcyriaflavin A + beta-D-glucose. Its pathway is alkaloid biosynthesis. Functionally, catalyzes the penultimate step in the biosynthesis of rebeccamycin, an indolocarbazole alkaloid that inhibits topoisomerase 1. Has a wide substrate range, including staurosporine aglycone, EJG-III-108A, J-104303, 6-N-methyl-arcyriaflavin and indolo-[2,3-a]-carbazole. The sequence is that of 4'-demethylrebeccamycin synthase (rebG) from Lentzea aerocolonigenes (Lechevalieria aerocolonigenes).